The sequence spans 127 residues: Putative adhesin P1-like protein MPN_203 (127 aa).

Residues 70–90 are disordered; that stretch reads TENFTQPQPQPQALKTTTPVF.

It belongs to the adhesin P1 family.

The sequence is that of Putative adhesin P1-like protein MPN_203 from Mycoplasma pneumoniae (strain ATCC 29342 / M129 / Subtype 1) (Mycoplasmoides pneumoniae).